The following is a 96-amino-acid chain: Large ribosomal subunit protein bL28 (96 aa).

A disordered region spans residues Met1–Ala21.

It belongs to the bacterial ribosomal protein bL28 family.

This chain is Large ribosomal subunit protein bL28, found in Jannaschia sp. (strain CCS1).